The primary structure comprises 556 residues: Formate--tetrahydrofolate ligase (556 aa).

Residue 65 to 72 (TPAGEGKS) coordinates ATP.

The protein belongs to the formate--tetrahydrofolate ligase family.

It carries out the reaction (6S)-5,6,7,8-tetrahydrofolate + formate + ATP = (6R)-10-formyltetrahydrofolate + ADP + phosphate. It functions in the pathway one-carbon metabolism; tetrahydrofolate interconversion. This chain is Formate--tetrahydrofolate ligase, found in Streptococcus pneumoniae (strain Taiwan19F-14).